A 369-amino-acid chain; its full sequence is MPSDFPPGQAGIHARFRVDYPEFSLDVDLRLPGRGVTALFGQSGSGKTTCLRCMAGLAPVSDGYLDINGEVWLDSAARRAVPTHKRALGYVFQEASLFEHLDVLANLRYGMKRVPPALRRVDLEQATGLLGIGHLLARMPAGLSGGERQRVGIARALLTSPRLLLMDEPLAALDVQRKREILPYLERLHDELDIPVIYVSHSPDEVARLADHLVLLEQGRAVASGPLDALLTRLDLPMAMTDDASVVVTGEAAGFDPGYALLTLQLPGGRARLRFVHQAAPAGQRLRVVVHARDVSLALQQPREGSILNVLAVRVLEMAPAANPAHVMVRLDADGTPLLARITRYSRDRLALAPEMQAWAQIKAVSLLA.

One can recognise an ABC transporter domain in the interval 7 to 243; sequence PGQAGIHARF…LDLPMAMTDD (237 aa). 41–48 is an ATP binding site; that stretch reads GQSGSGKT. Positions 304 to 369 constitute a Mop domain; the sequence is EGSILNVLAV…AQIKAVSLLA (66 aa).

It belongs to the ABC transporter superfamily. Molybdate importer (TC 3.A.1.8) family. The complex is composed of two ATP-binding proteins (ModC), two transmembrane proteins (ModB) and a solute-binding protein (ModA).

Its subcellular location is the cell inner membrane. The enzyme catalyses molybdate(out) + ATP + H2O = molybdate(in) + ADP + phosphate + H(+). Its function is as follows. Part of the ABC transporter complex ModABC involved in molybdenum import. Responsible for energy coupling to the transport system. The protein is Molybdenum import ATP-binding protein ModC of Bordetella pertussis (strain Tohama I / ATCC BAA-589 / NCTC 13251).